The chain runs to 875 residues: Leucine--tRNA ligase (875 aa).

The 'HIGH' region signature appears at 43 to 53; it reads PYPSGRIHIGH. A 'KMSKS' region motif is present at residues 631 to 635; the sequence is KMSKS. K634 contacts ATP.

This sequence belongs to the class-I aminoacyl-tRNA synthetase family.

Its subcellular location is the cytoplasm. The catalysed reaction is tRNA(Leu) + L-leucine + ATP = L-leucyl-tRNA(Leu) + AMP + diphosphate. This is Leucine--tRNA ligase from Mesorhizobium japonicum (strain LMG 29417 / CECT 9101 / MAFF 303099) (Mesorhizobium loti (strain MAFF 303099)).